The sequence spans 635 residues: 1-deoxy-D-xylulose-5-phosphate synthase (635 aa).

Thiamine diphosphate contacts are provided by residues His-74 and 115–117; that span reads AHS. Asp-146 contributes to the Mg(2+) binding site. Residues 147–148, Asn-176, Tyr-283, and Glu-365 each bind thiamine diphosphate; that span reads GA. Asn-176 contributes to the Mg(2+) binding site.

This sequence belongs to the transketolase family. DXPS subfamily. Homodimer. Requires Mg(2+) as cofactor. Thiamine diphosphate is required as a cofactor.

The catalysed reaction is D-glyceraldehyde 3-phosphate + pyruvate + H(+) = 1-deoxy-D-xylulose 5-phosphate + CO2. Its pathway is metabolic intermediate biosynthesis; 1-deoxy-D-xylulose 5-phosphate biosynthesis; 1-deoxy-D-xylulose 5-phosphate from D-glyceraldehyde 3-phosphate and pyruvate: step 1/1. In terms of biological role, catalyzes the acyloin condensation reaction between C atoms 2 and 3 of pyruvate and glyceraldehyde 3-phosphate to yield 1-deoxy-D-xylulose-5-phosphate (DXP). This chain is 1-deoxy-D-xylulose-5-phosphate synthase, found in Paraburkholderia xenovorans (strain LB400).